A 224-amino-acid chain; its full sequence is tRNA pseudouridine synthase B (224 aa).

Catalysis depends on aspartate 46, which acts as the Nucleophile.

This sequence belongs to the pseudouridine synthase TruB family. Type 1 subfamily.

It catalyses the reaction uridine(55) in tRNA = pseudouridine(55) in tRNA. Its function is as follows. Responsible for synthesis of pseudouridine from uracil-55 in the psi GC loop of transfer RNAs. This Methylococcus capsulatus (strain ATCC 33009 / NCIMB 11132 / Bath) protein is tRNA pseudouridine synthase B.